Reading from the N-terminus, the 454-residue chain is MTMTMHLGLDYIDSLVEEDENEGIYRCKREMFTDPRLFDLEMKHIFEGNWIYLAHESQIPEKNDYYTTQMGRQPIFITRNKDGELNAFVNACSHRGATLCRFRSGNKATHTCSFHGWTFSNSGKLLKVKDPKGAGYPDSFDCDGSHDLKKVARFASYRGFLFGSLREDVAPLEEFLGESRKVIDMVVDQSPEGLEVLRGSSTYVYEGNWKVQVENGADGYHVSTVHWNYAATQQQRKLRDAGDDIRAMTASSWGGDGGGFYSFENGHQMVWARWGDPKNRPLFAERDRLASEFGEARADWMIGVSRNLCLYPNLYLMDQFGSQLRITRPLSVDRTEITIYCIAPKGETPRRARRVRQYEDFFNVSGMATPDDLEEFRACQEGFAGGGMNDMSRGAKHWIEGPDEGAKEIDLHPKLSGVRSEDEGLFVMQHKYWQQQMIKAVKREQDRLIHAEGV.

A Rieske domain is found at 51-148; it reads IYLAHESQIP…SFDCDGSHDL (98 aa). Positions 92, 94, 112, and 115 each coordinate [2Fe-2S] cluster. Fe cation-binding residues include His221 and His226.

It belongs to the bacterial ring-hydroxylating dioxygenase alpha subunit family. In terms of assembly, this dioxygenase system consists of three proteins: the two subunits of the hydroxylase component (XylX and XylY), and an electron transfer component (XylZ). It depends on [2Fe-2S] cluster as a cofactor. Requires Fe cation as cofactor.

The protein operates within xenobiotic degradation; toluene degradation. In Pseudomonas putida (Arthrobacter siderocapsulatus), this protein is Toluate 1,2-dioxygenase subunit alpha (xylX).